The primary structure comprises 160 residues: Globin CTT-Y (160 aa).

Residues 1 to 16 form the signal peptide; sequence MKVLAIFALCIIGALA. The Globin domain maps to 17-160; sequence TPCDDFKIMQ…IRKVINANLE (144 aa). Positions 74 and 109 each coordinate heme b.

It belongs to the globin family.

This chain is Globin CTT-Y (CTT-Y), found in Chironomus thummi piger (Midge).